The following is a 399-amino-acid chain: tRNA-specific 2-thiouridylase MnmA (399 aa).

ATP is bound by residues 21–28 (AMSGGVDS) and L47. Catalysis depends on C115, which acts as the Nucleophile. A disulfide bond links C115 and C211. An ATP-binding site is contributed by G139. The segment at 161–163 (RDQ) is interaction with tRNA. C211 acts as the Cysteine persulfide intermediate in catalysis.

The protein belongs to the MnmA/TRMU family.

Its subcellular location is the cytoplasm. It catalyses the reaction S-sulfanyl-L-cysteinyl-[protein] + uridine(34) in tRNA + AH2 + ATP = 2-thiouridine(34) in tRNA + L-cysteinyl-[protein] + A + AMP + diphosphate + H(+). Its function is as follows. Catalyzes the 2-thiolation of uridine at the wobble position (U34) of tRNA, leading to the formation of s(2)U34. The sequence is that of tRNA-specific 2-thiouridylase MnmA from Parvibaculum lavamentivorans (strain DS-1 / DSM 13023 / NCIMB 13966).